Here is a 442-residue protein sequence, read N- to C-terminus: Putative major teichoic acid biosynthesis protein C (442 aa).

Its function is as follows. Unknown. Might be involved in poly(glycerol phosphate) teichoic acid biosynthesis. The polypeptide is Putative major teichoic acid biosynthesis protein C (tagC) (Bacillus subtilis (strain 168)).